We begin with the raw amino-acid sequence, 164 residues long: MDLFVFFALIWPPYVANGSAVLASRLKWRHPVDFGHNFVDGRRLFGDGKTYEGLAIGVVLGTVVGYLPNLLHPTLTLLDALILSVAALLGDLLGAFIKRRLCMPRGHPAFPLDQLDFILMAMLVRSLYADVPVEYIIAASVVTPIIHRATNIAAYILRLKKEPW.

4 consecutive transmembrane segments (helical) span residues Leu-3 to Ala-23, Gly-53 to Pro-73, Leu-77 to Ile-97, and Ser-126 to Ile-146.

This sequence belongs to the CDP-archaeol synthase family. The cofactor is Mg(2+).

It localises to the cell membrane. The catalysed reaction is 2,3-bis-O-(geranylgeranyl)-sn-glycerol 1-phosphate + CTP + H(+) = CDP-2,3-bis-O-(geranylgeranyl)-sn-glycerol + diphosphate. Its pathway is membrane lipid metabolism; glycerophospholipid metabolism. Catalyzes the formation of CDP-2,3-bis-(O-geranylgeranyl)-sn-glycerol (CDP-archaeol) from 2,3-bis-(O-geranylgeranyl)-sn-glycerol 1-phosphate (DGGGP) and CTP. This reaction is the third ether-bond-formation step in the biosynthesis of archaeal membrane lipids. The polypeptide is CDP-archaeol synthase (Pyrobaculum arsenaticum (strain DSM 13514 / JCM 11321 / PZ6)).